The sequence spans 221 residues: Serine/arginine-rich splicing factor 9 (221 aa).

2 RRM domains span residues Gly-14–Ala-89 and Phe-111–Gly-187. Lys-36 is covalently cross-linked (Glycyl lysine isopeptide (Lys-Gly) (interchain with G-Cter in SUMO2)). Over residues Gly-187–Gly-198 the composition is skewed to low complexity. The disordered stretch occupies residues Gly-187–Tyr-221. The segment at Thr-188–Arg-200 is interaction with SAFB1. Ser-189, Ser-193, Ser-195, Ser-204, Ser-208, and Ser-211 each carry phosphoserine. Tyr-214 is modified (phosphotyrosine). Ser-216 carries the post-translational modification Phosphoserine.

It belongs to the splicing factor SR family. Interacts with KHDRBS3. Interacts with HABP4. Interacts with NOL3/ARC/NOP30. Interacts with NSEP1/YB-1/YB1. Interacts with SAFB/SAFB1. Interacts with SRSF6/SFRS6. Interacts with TRA2B/SFRS10. Interacts with C1QBP. May also interact with DUSP11/PIR1. In terms of processing, extensively phosphorylated on serine residues in the RS domain.

The protein resides in the nucleus. Functionally, plays a role in constitutive splicing and can modulate the selection of alternative splice sites. Represses the splicing of MAPT/Tau exon 10. This is Serine/arginine-rich splicing factor 9 (Srsf9) from Rattus norvegicus (Rat).